A 359-amino-acid polypeptide reads, in one-letter code: DNA replication and repair protein RecF (359 aa).

Position 30-37 (Gly-30–Thr-37) interacts with ATP.

It belongs to the RecF family.

The protein localises to the cytoplasm. Functionally, the RecF protein is involved in DNA metabolism; it is required for DNA replication and normal SOS inducibility. RecF binds preferentially to single-stranded, linear DNA. It also seems to bind ATP. The protein is DNA replication and repair protein RecF of Lactococcus lactis subsp. cremoris (strain MG1363).